A 522-amino-acid chain; its full sequence is Maturase K (522 aa).

The protein belongs to the intron maturase 2 family. MatK subfamily.

The protein resides in the plastid. It localises to the chloroplast. Usually encoded in the trnK tRNA gene intron. Probably assists in splicing its own and other chloroplast group II introns. This chain is Maturase K, found in Iris tenax (Oregon iris).